Here is a 313-residue protein sequence, read N- to C-terminus: Olfactory receptor 1J2 (313 aa).

Residues 1–25 are Extracellular-facing; it reads MSPENQSSVSEFLLLGLPIRPEQQA. An N-linked (GlcNAc...) asparagine glycan is attached at asparagine 5. The chain crosses the membrane as a helical span at residues 26-49; it reads VFFTLFLGMYLTTVLGNLLIMLLI. At 50 to 57 the chain is on the cytoplasmic side; the sequence is QLDSHLHT. The helical transmembrane segment at 58–79 threads the bilayer; sequence PMYFFLSHLALTDISFSSVTVP. The Extracellular portion of the chain corresponds to 80-100; sequence KMLMDMRTKYKSILYEECISQ. Cysteine 97 and cysteine 189 are disulfide-bonded. A helical transmembrane segment spans residues 101-120; that stretch reads MYFFIFFTDLDSFLITSMAY. At 121–139 the chain is on the cytoplasmic side; sequence DRYVAICHPLHYTVIMREE. Residues 140–158 form a helical membrane-spanning segment; that stretch reads LCVFLVAVSWILSCASSLS. The Extracellular segment spans residues 159-196; that stretch reads HTLLLTRLSFCAANTIPHVFCDLAALLKLSCSDIFLNE. The chain crosses the membrane as a helical span at residues 197-219; sequence LVMFTVGVVVITLPFMCILVSYG. Residues 220-236 lie on the Cytoplasmic side of the membrane; sequence YIGATILRVPSTKGIHK. Residues 237–259 traverse the membrane as a helical segment; sequence ALSTCGSHLSVVSLYYGSIFGQY. Topologically, residues 260–272 are extracellular; the sequence is LFPTVSSSIDKDV. A helical transmembrane segment spans residues 273 to 292; that stretch reads IVALMYTVVTPMLNPFIYSL. Topologically, residues 293 to 313 are cytoplasmic; it reads RNRDMKEALGKLFSRATFFSW.

This sequence belongs to the G-protein coupled receptor 1 family.

The protein resides in the cell membrane. In terms of biological role, odorant receptor. This chain is Olfactory receptor 1J2 (OR1J2), found in Homo sapiens (Human).